Consider the following 150-residue polypeptide: SsrA-binding protein (150 aa).

Belongs to the SmpB family.

Its subcellular location is the cytoplasm. Its function is as follows. Required for rescue of stalled ribosomes mediated by trans-translation. Binds to transfer-messenger RNA (tmRNA), required for stable association of tmRNA with ribosomes. tmRNA and SmpB together mimic tRNA shape, replacing the anticodon stem-loop with SmpB. tmRNA is encoded by the ssrA gene; the 2 termini fold to resemble tRNA(Ala) and it encodes a 'tag peptide', a short internal open reading frame. During trans-translation Ala-aminoacylated tmRNA acts like a tRNA, entering the A-site of stalled ribosomes, displacing the stalled mRNA. The ribosome then switches to translate the ORF on the tmRNA; the nascent peptide is terminated with the 'tag peptide' encoded by the tmRNA and targeted for degradation. The ribosome is freed to recommence translation, which seems to be the essential function of trans-translation. This is SsrA-binding protein from Magnetococcus marinus (strain ATCC BAA-1437 / JCM 17883 / MC-1).